The chain runs to 245 residues: Tryptophan synthase alpha chain (245 aa).

Catalysis depends on proton acceptor residues Glu37 and Asp48.

This sequence belongs to the TrpA family. In terms of assembly, tetramer of two alpha and two beta chains.

It carries out the reaction (1S,2R)-1-C-(indol-3-yl)glycerol 3-phosphate + L-serine = D-glyceraldehyde 3-phosphate + L-tryptophan + H2O. It participates in amino-acid biosynthesis; L-tryptophan biosynthesis; L-tryptophan from chorismate: step 5/5. The alpha subunit is responsible for the aldol cleavage of indoleglycerol phosphate to indole and glyceraldehyde 3-phosphate. The chain is Tryptophan synthase alpha chain from Saccharolobus solfataricus (strain ATCC 35092 / DSM 1617 / JCM 11322 / P2) (Sulfolobus solfataricus).